A 92-amino-acid polypeptide reads, in one-letter code: Acylphosphatase (92 aa).

A disulfide bridge links cysteine 5 with cysteine 49. The 88-residue stretch at 5–92 (CIIAWIYGRV…SGELTDFRIR (88 aa)) folds into the Acylphosphatase-like domain. Residues arginine 20 and asparagine 38 contribute to the active site.

The protein belongs to the acylphosphatase family.

The catalysed reaction is an acyl phosphate + H2O = a carboxylate + phosphate + H(+). In Escherichia coli O1:K1 / APEC, this protein is Acylphosphatase.